The sequence spans 456 residues: Asparagine--tRNA ligase (456 aa).

It belongs to the class-II aminoacyl-tRNA synthetase family. As to quaternary structure, homodimer.

It is found in the cytoplasm. The catalysed reaction is tRNA(Asn) + L-asparagine + ATP = L-asparaginyl-tRNA(Asn) + AMP + diphosphate + H(+). In Mycoplasmoides gallisepticum (strain R(low / passage 15 / clone 2)) (Mycoplasma gallisepticum), this protein is Asparagine--tRNA ligase.